Consider the following 46-residue polypeptide: Probable butyrate kinase (46 aa).

It belongs to the acetokinase family.

It localises to the cytoplasm. The enzyme catalyses butanoate + ATP = butanoyl phosphate + ADP. The chain is Probable butyrate kinase (buk) from Geobacillus stearothermophilus (Bacillus stearothermophilus).